The chain runs to 947 residues: Bifunctional glutamine synthetase adenylyltransferase/adenylyl-removing enzyme (947 aa).

The interval 1–440 (MTPLSSPLSQ…VFNELIGDDE (440 aa)) is adenylyl removase. The tract at residues 450-947 (SEPWREVWQD…ASWRKWLVAV (498 aa)) is adenylyl transferase.

It belongs to the GlnE family. The cofactor is Mg(2+).

The catalysed reaction is [glutamine synthetase]-O(4)-(5'-adenylyl)-L-tyrosine + phosphate = [glutamine synthetase]-L-tyrosine + ADP. The enzyme catalyses [glutamine synthetase]-L-tyrosine + ATP = [glutamine synthetase]-O(4)-(5'-adenylyl)-L-tyrosine + diphosphate. In terms of biological role, involved in the regulation of glutamine synthetase GlnA, a key enzyme in the process to assimilate ammonia. When cellular nitrogen levels are high, the C-terminal adenylyl transferase (AT) inactivates GlnA by covalent transfer of an adenylyl group from ATP to specific tyrosine residue of GlnA, thus reducing its activity. Conversely, when nitrogen levels are low, the N-terminal adenylyl removase (AR) activates GlnA by removing the adenylyl group by phosphorolysis, increasing its activity. The regulatory region of GlnE binds the signal transduction protein PII (GlnB) which indicates the nitrogen status of the cell. The polypeptide is Bifunctional glutamine synthetase adenylyltransferase/adenylyl-removing enzyme (Salmonella enteritidis PT4 (strain P125109)).